A 117-amino-acid polypeptide reads, in one-letter code: Large ribosomal subunit protein eL34 (117 aa).

Ser12 bears the Phosphoserine mark. An N6-acetyllysine mark is found at Lys36 and Lys43. A Glycyl lysine isopeptide (Lys-Gly) (interchain with G-Cter in SUMO2) cross-link involves residue Lys108.

It belongs to the eukaryotic ribosomal protein eL34 family. In terms of assembly, component of the large ribosomal subunit.

Its subcellular location is the cytoplasm. It localises to the cytosol. The protein localises to the endoplasmic reticulum. Functionally, component of the large ribosomal subunit. The ribosome is a large ribonucleoprotein complex responsible for the synthesis of proteins in the cell. This Rattus norvegicus (Rat) protein is Large ribosomal subunit protein eL34 (Rpl34).